Here is a 937-residue protein sequence, read N- to C-terminus: Isoleucine--tRNA ligase (937 aa).

Residues 58-68 (PYANGNIHIGH) carry the 'HIGH' region motif. Residue E560 participates in L-isoleucyl-5'-AMP binding. The short motif at 601 to 605 (KMSKS) is the 'KMSKS' region element. Position 604 (K604) interacts with ATP. Residues C900, C903, C920, and C923 each coordinate Zn(2+).

The protein belongs to the class-I aminoacyl-tRNA synthetase family. IleS type 1 subfamily. Monomer. Zn(2+) serves as cofactor.

The protein localises to the cytoplasm. It catalyses the reaction tRNA(Ile) + L-isoleucine + ATP = L-isoleucyl-tRNA(Ile) + AMP + diphosphate. Functionally, catalyzes the attachment of isoleucine to tRNA(Ile). As IleRS can inadvertently accommodate and process structurally similar amino acids such as valine, to avoid such errors it has two additional distinct tRNA(Ile)-dependent editing activities. One activity is designated as 'pretransfer' editing and involves the hydrolysis of activated Val-AMP. The other activity is designated 'posttransfer' editing and involves deacylation of mischarged Val-tRNA(Ile). This is Isoleucine--tRNA ligase from Thioalkalivibrio sulfidiphilus (strain HL-EbGR7).